Here is a 447-residue protein sequence, read N- to C-terminus: Diaminopimelate decarboxylase (447 aa).

At Lys-72 the chain carries N6-(pyridoxal phosphate)lysine. Pyridoxal 5'-phosphate contacts are provided by residues Gly-258 and 300–303 (EPGR). 3 residues coordinate substrate: Arg-303, Arg-344, and Tyr-348. Catalysis depends on Cys-375, which acts as the Proton donor. Glu-376 and Tyr-405 together coordinate substrate. Tyr-405 provides a ligand contact to pyridoxal 5'-phosphate.

The protein belongs to the Orn/Lys/Arg decarboxylase class-II family. LysA subfamily. As to quaternary structure, homodimer. Pyridoxal 5'-phosphate serves as cofactor.

It carries out the reaction meso-2,6-diaminopimelate + H(+) = L-lysine + CO2. It participates in amino-acid biosynthesis; L-lysine biosynthesis via DAP pathway; L-lysine from DL-2,6-diaminopimelate: step 1/1. Functionally, specifically catalyzes the decarboxylation of meso-diaminopimelate (meso-DAP) to L-lysine. The sequence is that of Diaminopimelate decarboxylase from Mycobacterium bovis (strain ATCC BAA-935 / AF2122/97).